The chain runs to 458 residues: tRNA-2-methylthio-N(6)-dimethylallyladenosine synthase (458 aa).

In terms of domain architecture, MTTase N-terminal spans 15–134; it reads KKVFIKTYGC…LPELLEKAKQ (120 aa). C24, C60, C97, C175, C179, and C182 together coordinate [4Fe-4S] cluster. A Radical SAM core domain is found at 161 to 395; sequence RKRGVSAFLT…LLLEQQNTFL (235 aa). The TRAM domain occupies 396–457; the sequence is RSKIGQKTDV…SNSFVGEMTN (62 aa).

It belongs to the methylthiotransferase family. MiaB subfamily. As to quaternary structure, monomer. It depends on [4Fe-4S] cluster as a cofactor.

Its subcellular location is the cytoplasm. It catalyses the reaction N(6)-dimethylallyladenosine(37) in tRNA + (sulfur carrier)-SH + AH2 + 2 S-adenosyl-L-methionine = 2-methylsulfanyl-N(6)-dimethylallyladenosine(37) in tRNA + (sulfur carrier)-H + 5'-deoxyadenosine + L-methionine + A + S-adenosyl-L-homocysteine + 2 H(+). Its function is as follows. Catalyzes the methylthiolation of N6-(dimethylallyl)adenosine (i(6)A), leading to the formation of 2-methylthio-N6-(dimethylallyl)adenosine (ms(2)i(6)A) at position 37 in tRNAs that read codons beginning with uridine. This chain is tRNA-2-methylthio-N(6)-dimethylallyladenosine synthase, found in Bartonella tribocorum (strain CIP 105476 / IBS 506).